Reading from the N-terminus, the 632-residue chain is Chaperone protein DnaK (632 aa).

Phosphothreonine; by autocatalysis is present on T199. Over residues 597 to 611 the composition is skewed to low complexity; the sequence is AAQQAGQAEGQAAQE. Residues 597-632 are disordered; the sequence is AAQQAGQAEGQAAQEPSQSTGNAQAEATDAEYEEVK. Residues 612–621 are compositionally biased toward polar residues; it reads PSQSTGNAQA.

It belongs to the heat shock protein 70 family.

In terms of biological role, acts as a chaperone. This chain is Chaperone protein DnaK, found in Amoebophilus asiaticus (strain 5a2).